The following is a 435-amino-acid chain: Chaperone SurA (435 aa).

Positions 1–29 (MINKTLHTKHTLLGLLAMAVLMIPVWSQA) are cleaved as a signal peptide. PpiC domains lie at 180–281 (QEDF…KMID) and 290–390 (VTQY…RVDD).

Its subcellular location is the periplasm. It catalyses the reaction [protein]-peptidylproline (omega=180) = [protein]-peptidylproline (omega=0). In terms of biological role, chaperone involved in the correct folding and assembly of outer membrane proteins. Recognizes specific patterns of aromatic residues and the orientation of their side chains, which are found more frequently in integral outer membrane proteins. May act in both early periplasmic and late outer membrane-associated steps of protein maturation. This chain is Chaperone SurA, found in Alcanivorax borkumensis (strain ATCC 700651 / DSM 11573 / NCIMB 13689 / SK2).